The primary structure comprises 265 residues: uncharacterized protein (265 aa).

2 disordered regions span residues 162-183 (VTKK…NNDQ) and 196-239 (AKTN…DKEI). Polar residues-rich tracts occupy residues 165–183 (KNAS…NNDQ) and 213–233 (QSTS…GNAS).

Belongs to the MG185/MG260 family.

This is an uncharacterized protein from Mycoplasma pneumoniae (strain ATCC 29342 / M129 / Subtype 1) (Mycoplasmoides pneumoniae).